Consider the following 58-residue polypeptide: Probable U-exon protein (58 aa).

This chain is Probable U-exon protein, found in Snake adenovirus serotype 1 (SnAdV-1).